The primary structure comprises 350 residues: Protein RecA (350 aa).

66–73 is a binding site for ATP; that stretch reads GPESSGKT.

This sequence belongs to the RecA family.

Its subcellular location is the cytoplasm. Its function is as follows. Can catalyze the hydrolysis of ATP in the presence of single-stranded DNA, the ATP-dependent uptake of single-stranded DNA by duplex DNA, and the ATP-dependent hybridization of homologous single-stranded DNAs. It interacts with LexA causing its activation and leading to its autocatalytic cleavage. This chain is Protein RecA, found in Dichelobacter nodosus (strain VCS1703A).